The chain runs to 267 residues: 2-oxo-hept-4-ene-1,7-dioate hydratase (267 aa).

Positions 106, 108, and 139 each coordinate Mg(2+).

Belongs to the hydratase/decarboxylase family. Homodecamer. Requires Mg(2+) as cofactor.

The enzyme catalyses (4Z)-2-oxohept-4-enedioate + H2O = (4S)-4-hydroxy-2-oxoheptanedioate. The protein operates within aromatic compound metabolism; 4-hydroxyphenylacetate degradation; pyruvate and succinate semialdehyde from 4-hydroxyphenylacetate: step 6/7. Functionally, transforms 2-oxo-hept-4-ene-1,7-dioate (OHED) into 4-hydroxy-2-oxoheptanedioate, a step in the 4-hydroxyphenylacetic acid (4-HPA) degradation pathway. The polypeptide is 2-oxo-hept-4-ene-1,7-dioate hydratase (Escherichia coli).